Reading from the N-terminus, the 305-residue chain is uncharacterized protein (305 aa).

The segment covering 1 to 10 (MLWAQRKKRK) has biased composition (basic residues). The disordered stretch occupies residues 1–30 (MLWAQRKKRKATTETTEDKPAESHRPNDSW). Basic and acidic residues predominate over residues 16 to 27 (TEDKPAESHRPN). Ser39 bears the Phosphoserine mark. Residues 92–101 (QKISGTSVSK) are compositionally biased toward polar residues. The segment at 92-114 (QKISGTSVSKEMQRESGKSPSME) is disordered. Position 158 is a phosphoserine (Ser158). Residues 197-208 (SHHGNQSHQNHN) are compositionally biased toward low complexity. Positions 197–305 (SHHGNQSHQN…VNRRNQIYDS (109 aa)) are disordered. Composition is skewed to polar residues over residues 209-221 (TYPCHQNNQSRSV) and 231-244 (LSHQGYPSYSSHQN). Positions 247–293 (GHPSQQGHSSHSNQQGHLGLSSQQGHPSQSSHQSHQGQPGHPNHQSH) are enriched in low complexity. The span at 294–305 (SLVNRRNQIYDS) shows a compositional bias: polar residues.

This is an uncharacterized protein from Rattus norvegicus (Rat).